A 352-amino-acid chain; its full sequence is Aliphatic aldoxime dehydratase (352 aa).

An aliphatic aldoxime is bound at residue Ser-219. His-299 contacts heme b. His-320 is an an aliphatic aldoxime binding site. The active site involves His-320.

The protein belongs to the heme-containing dehydratase family. In terms of assembly, homodimer. Heme b serves as cofactor. Ca(2+) is required as a cofactor.

It catalyses the reaction an aliphatic aldoxime = a nitrile + H2O. With respect to regulation, active when the heme iron is in the ferrous state. Is very sensitive to AgNO(3), is also inhibited by hydroxylamine and phenylhydrazine, and hardly inhibited by thiol reagents. Not sensitive to chelating agents and serine-modifying reagents. Functionally, catalyzes the dehydration of aldoximes to their corresponding nitrile. Aliphatic aldoximes are more effective substrates than aromatic aldoximes. Shows high activity with butyraldoxime and acetaldoxime, but only weak activity with the aromatic aldoxime pyridine-2-aldoxime. Cannot use benzaldoxime, isonitrosoacetophenone and pyridine-4-aldoxime. Is involved in the metabolism of aldoxime in vivo. The polypeptide is Aliphatic aldoxime dehydratase (Pseudomonas chlororaphis (Pseudomonas aureofaciens)).